We begin with the raw amino-acid sequence, 180 residues long: uncharacterized protein (180 aa).

Helical transmembrane passes span 4–24 (KSNIKLILATDLLAVLILSLF), 25–45 (IKNFKMVLAFLLAVFVIWLFI), 57–77 (NLLAMSVGFIEGILIFLGIIY), 81–101 (FLDITLGIFAILILIVMGILF), 124–144 (FLTLISIFGMLLTIYVFLLIL), and 156–176 (IIRTIMLVITANMFIIEFYTF).

The protein resides in the cell membrane. This is an uncharacterized protein from Methanocaldococcus jannaschii (strain ATCC 43067 / DSM 2661 / JAL-1 / JCM 10045 / NBRC 100440) (Methanococcus jannaschii).